We begin with the raw amino-acid sequence, 341 residues long: L-threonine 3-dehydrogenase (341 aa).

Position 38 (C38) interacts with Zn(2+). Catalysis depends on charge relay system residues T40 and H43. Residues H63, E64, C93, C96, C99, and C107 each coordinate Zn(2+). NAD(+) contacts are provided by residues I175, D195, R200, L262–I264, and I286–Y287.

The protein belongs to the zinc-containing alcohol dehydrogenase family. In terms of assembly, homotetramer. Zn(2+) serves as cofactor.

It is found in the cytoplasm. It carries out the reaction L-threonine + NAD(+) = (2S)-2-amino-3-oxobutanoate + NADH + H(+). It functions in the pathway amino-acid degradation; L-threonine degradation via oxydo-reductase pathway; glycine from L-threonine: step 1/2. Catalyzes the NAD(+)-dependent oxidation of L-threonine to 2-amino-3-ketobutyrate. The protein is L-threonine 3-dehydrogenase of Escherichia coli (strain K12 / MC4100 / BW2952).